We begin with the raw amino-acid sequence, 266 residues long: Small ribosomal subunit protein uS3 (266 aa).

Residues 39–107 (VREYLKKKLK…PVHVNIEEIR (69 aa)) enclose the KH type-2 domain. Residues 218-266 (EVAEDKRPRRNARPGDRRPRRDGEGGAPGARRGAPRRGAGKPEDGKTGE) are disordered. 2 stretches are compositionally biased toward basic and acidic residues: residues 230–241 (RPGDRRPRRDGE) and 257–266 (GKPEDGKTGE).

It belongs to the universal ribosomal protein uS3 family. Part of the 30S ribosomal subunit. Forms a tight complex with proteins S10 and S14.

Its function is as follows. Binds the lower part of the 30S subunit head. Binds mRNA in the 70S ribosome, positioning it for translation. The polypeptide is Small ribosomal subunit protein uS3 (Burkholderia ambifaria (strain MC40-6)).